The primary structure comprises 390 residues: Alcohol dehydrogenase-like 7 (390 aa).

Zn(2+) is bound by residues cysteine 56, serine 58, histidine 78, cysteine 108, cysteine 111, cysteine 114, cysteine 122, and cysteine 187. An alcohol is bound by residues serine 58 and histidine 78. Serine 58 is a binding site for NAD(+). NAD(+)-binding positions include 212–217, aspartate 236, lysine 241, 306–308, phenylalanine 334, and arginine 384; these read GLGSIG and LGV.

It belongs to the zinc-containing alcohol dehydrogenase family. Class-III subfamily. Homodimer. It depends on Zn(2+) as a cofactor.

It is found in the cytoplasm. The enzyme catalyses a primary alcohol + NAD(+) = an aldehyde + NADH + H(+). It catalyses the reaction a secondary alcohol + NAD(+) = a ketone + NADH + H(+). The chain is Alcohol dehydrogenase-like 7 from Arabidopsis thaliana (Mouse-ear cress).